Here is a 306-residue protein sequence, read N- to C-terminus: 4-hydroxy-3-methylbut-2-enyl diphosphate reductase (306 aa).

Position 12 (Cys-12) interacts with [4Fe-4S] cluster. The (2E)-4-hydroxy-3-methylbut-2-enyl diphosphate site is built by His-41 and His-74. Residues His-41 and His-74 each contribute to the dimethylallyl diphosphate site. Isopentenyl diphosphate-binding residues include His-41 and His-74. Position 96 (Cys-96) interacts with [4Fe-4S] cluster. His-124 is a binding site for (2E)-4-hydroxy-3-methylbut-2-enyl diphosphate. Residue His-124 participates in dimethylallyl diphosphate binding. Isopentenyl diphosphate is bound at residue His-124. Glu-126 acts as the Proton donor in catalysis. Residue Thr-164 participates in (2E)-4-hydroxy-3-methylbut-2-enyl diphosphate binding. Cys-194 contacts [4Fe-4S] cluster. (2E)-4-hydroxy-3-methylbut-2-enyl diphosphate contacts are provided by Ser-222, Ser-223, Asn-224, and Ser-266. The dimethylallyl diphosphate site is built by Ser-222, Ser-223, Asn-224, and Ser-266. Positions 222, 223, 224, and 266 each coordinate isopentenyl diphosphate.

This sequence belongs to the IspH family. [4Fe-4S] cluster is required as a cofactor.

It catalyses the reaction isopentenyl diphosphate + 2 oxidized [2Fe-2S]-[ferredoxin] + H2O = (2E)-4-hydroxy-3-methylbut-2-enyl diphosphate + 2 reduced [2Fe-2S]-[ferredoxin] + 2 H(+). The enzyme catalyses dimethylallyl diphosphate + 2 oxidized [2Fe-2S]-[ferredoxin] + H2O = (2E)-4-hydroxy-3-methylbut-2-enyl diphosphate + 2 reduced [2Fe-2S]-[ferredoxin] + 2 H(+). The protein operates within isoprenoid biosynthesis; dimethylallyl diphosphate biosynthesis; dimethylallyl diphosphate from (2E)-4-hydroxy-3-methylbutenyl diphosphate: step 1/1. It participates in isoprenoid biosynthesis; isopentenyl diphosphate biosynthesis via DXP pathway; isopentenyl diphosphate from 1-deoxy-D-xylulose 5-phosphate: step 6/6. Catalyzes the conversion of 1-hydroxy-2-methyl-2-(E)-butenyl 4-diphosphate (HMBPP) into a mixture of isopentenyl diphosphate (IPP) and dimethylallyl diphosphate (DMAPP). Acts in the terminal step of the DOXP/MEP pathway for isoprenoid precursor biosynthesis. This chain is 4-hydroxy-3-methylbut-2-enyl diphosphate reductase, found in Dechloromonas aromatica (strain RCB).